The following is a 428-amino-acid chain: Chaperone SurA (428 aa).

The signal sequence occupies residues 1-13 (MLGALLLSGAVHA). 2 consecutive PpiC domains span residues 164–265 (SEEF…KLLE) and 276–375 (RDEV…EVLG). Residues 211–230 (TSSSSENALEGGDMGWRKAA) form a disordered region.

The protein resides in the periplasm. The catalysed reaction is [protein]-peptidylproline (omega=180) = [protein]-peptidylproline (omega=0). Its function is as follows. Chaperone involved in the correct folding and assembly of outer membrane proteins. Recognizes specific patterns of aromatic residues and the orientation of their side chains, which are found more frequently in integral outer membrane proteins. May act in both early periplasmic and late outer membrane-associated steps of protein maturation. The polypeptide is Chaperone SurA (Pseudomonas syringae pv. syringae (strain B728a)).